Consider the following 123-residue polypeptide: MPTISQLVRRGRERLQVKKKAPALKESPQKRGVCTRVYTTTPKKPNSALRKVARVRLTNGFEVTSYIPGVGHNLQEHSVVLIRGGRVKDLPGVRYHIIRGTLDAVGVQGRKQGRSKYGAKRAS.

Aspartate 89 bears the 3-methylthioaspartic acid mark.

This sequence belongs to the universal ribosomal protein uS12 family. As to quaternary structure, part of the 30S ribosomal subunit. Contacts proteins S8 and S17. May interact with IF1 in the 30S initiation complex.

Functionally, with S4 and S5 plays an important role in translational accuracy. Its function is as follows. Interacts with and stabilizes bases of the 16S rRNA that are involved in tRNA selection in the A site and with the mRNA backbone. Located at the interface of the 30S and 50S subunits, it traverses the body of the 30S subunit contacting proteins on the other side and probably holding the rRNA structure together. The combined cluster of proteins S8, S12 and S17 appears to hold together the shoulder and platform of the 30S subunit. The polypeptide is Small ribosomal subunit protein uS12 (Anaeromyxobacter dehalogenans (strain 2CP-1 / ATCC BAA-258)).